The following is a 343-amino-acid chain: tRNA N6-adenosine threonylcarbamoyltransferase (343 aa).

The Fe cation site is built by His115 and His119. Residues 138 to 142 (LVSGA), Asp171, Gly184, and Asn276 each bind substrate. Position 304 (Asp304) interacts with Fe cation.

The protein belongs to the KAE1 / TsaD family. Fe(2+) serves as cofactor.

It is found in the cytoplasm. It catalyses the reaction L-threonylcarbamoyladenylate + adenosine(37) in tRNA = N(6)-L-threonylcarbamoyladenosine(37) in tRNA + AMP + H(+). Required for the formation of a threonylcarbamoyl group on adenosine at position 37 (t(6)A37) in tRNAs that read codons beginning with adenine. Is involved in the transfer of the threonylcarbamoyl moiety of threonylcarbamoyl-AMP (TC-AMP) to the N6 group of A37, together with TsaE and TsaB. TsaD likely plays a direct catalytic role in this reaction. The protein is tRNA N6-adenosine threonylcarbamoyltransferase of Buchnera aphidicola subsp. Cinara cedri (strain Cc).